The following is a 253-amino-acid chain: uncharacterized protein (253 aa).

The region spanning 4 to 73 (FGKSTADRVK…IDVSGVTVLQ (70 aa)) is the BON 1 domain. Over residues 79–93 (AAQTAPTTPAQTSPS) the composition is skewed to low complexity. Residues 79–105 (AAQTAPTTPAQTSPSVQDSPSTPVQMP) are disordered. In terms of domain architecture, BON 2 spans 119 to 188 (DTSRIAKAVL…VDISGLRVAQ (70 aa)). Residues 204–251 (TVYTVKPGDSLSKIAEHYYGDQMEYKKIAHYNNISNPDLIQPGQKLRI) form the LysM domain.

This is an uncharacterized protein from Deinococcus radiodurans (strain ATCC 13939 / DSM 20539 / JCM 16871 / CCUG 27074 / LMG 4051 / NBRC 15346 / NCIMB 9279 / VKM B-1422 / R1).